A 329-amino-acid polypeptide reads, in one-letter code: tRNA N6-adenosine threonylcarbamoyltransferase (329 aa).

Fe cation contacts are provided by His108, His112, and Tyr129. Substrate-binding positions include 129–133 (YVSGG), Asp161, Glu182, and Ser261. Asp289 is a Fe cation binding site.

Belongs to the KAE1 / TsaD family. The cofactor is Fe(2+).

The protein localises to the cytoplasm. It carries out the reaction L-threonylcarbamoyladenylate + adenosine(37) in tRNA = N(6)-L-threonylcarbamoyladenosine(37) in tRNA + AMP + H(+). Functionally, required for the formation of a threonylcarbamoyl group on adenosine at position 37 (t(6)A37) in tRNAs that read codons beginning with adenine. Is probably involved in the transfer of the threonylcarbamoyl moiety of threonylcarbamoyl-AMP (TC-AMP) to the N6 group of A37. This Ignicoccus hospitalis (strain KIN4/I / DSM 18386 / JCM 14125) protein is tRNA N6-adenosine threonylcarbamoyltransferase.